Consider the following 268-residue polypeptide: Tryptophan synthase alpha chain (268 aa).

Catalysis depends on proton acceptor residues Glu40 and Asp51.

This sequence belongs to the TrpA family. In terms of assembly, tetramer of two alpha and two beta chains.

The enzyme catalyses (1S,2R)-1-C-(indol-3-yl)glycerol 3-phosphate + L-serine = D-glyceraldehyde 3-phosphate + L-tryptophan + H2O. Its pathway is amino-acid biosynthesis; L-tryptophan biosynthesis; L-tryptophan from chorismate: step 5/5. In terms of biological role, the alpha subunit is responsible for the aldol cleavage of indoleglycerol phosphate to indole and glyceraldehyde 3-phosphate. The protein is Tryptophan synthase alpha chain of Geobacillus thermodenitrificans (strain NG80-2).